The sequence spans 142 residues: DNA-directed RNA polymerase subunit omega (142 aa).

The segment at 104 to 142 (FNTDADVDQESTDIQDDEVENEMSNQDSEDIDDEVDNEE) is disordered. Residues 108-142 (ADVDQESTDIQDDEVENEMSNQDSEDIDDEVDNEE) are compositionally biased toward acidic residues.

The protein belongs to the RNA polymerase subunit omega family. In terms of assembly, the RNAP catalytic core consists of 2 alpha, 1 beta, 1 beta' and 1 omega subunit. When a sigma factor is associated with the core the holoenzyme is formed, which can initiate transcription.

The catalysed reaction is RNA(n) + a ribonucleoside 5'-triphosphate = RNA(n+1) + diphosphate. Functionally, promotes RNA polymerase assembly. Latches the N- and C-terminal regions of the beta' subunit thereby facilitating its interaction with the beta and alpha subunits. This chain is DNA-directed RNA polymerase subunit omega, found in Wolbachia sp. subsp. Brugia malayi (strain TRS).